The primary structure comprises 257 residues: Melatonin receptor type 1A (257 aa).

Residues 5–22 (LASIVNDGWSLSSLHCQL) are Extracellular-facing. Residues Cys20 and Cys97 are joined by a disulfide bond. A helical membrane pass occupies residues 23-43 (SGFLMGLSVIGSVFNITGIAI). At 44 to 64 (NRYCCICHSLRYNKLYSSTNS) the chain is on the cytoplasmic side. A helical membrane pass occupies residues 65–85 (LCYVFLIWMLTLVAIVPNLCV). The Extracellular portion of the chain corresponds to 86-107 (GTLQYDPRIYSCTFTQSVSSAY). Residues 108–128 (TIAVVVFHFIVPMLVVIFCYL) form a helical membrane-spanning segment. At 129–160 (RIWALVLQVRWRVKPDNKPKLKPQDFRNFVTM) the chain is on the cytoplasmic side. Residues 161 to 181 (FVVFVLFAICWAPLNFIGLVV) form a helical membrane-spanning segment. At 182 to 194 (ASEPASMAPRIPE) the chain is on the extracellular side. Residues 195 to 215 (WLFVASYYMGYFNSCLNAIIY) traverse the membrane as a helical segment. At 216-257 (GLLNQNFRQEYRKIIVSLCTTKMFFVDSSNHVAHRIKRKPSP) the chain is on the cytoplasmic side.

It belongs to the G-protein coupled receptor 1 family.

Its subcellular location is the cell membrane. In terms of biological role, high affinity receptor for melatonin. Likely to mediate the reproductive and circadian actions of melatonin. The activity of this receptor is mediated by pertussis toxin sensitive G proteins that inhibit adenylate cyclase activity. Possibly involved in sleep induction, by melatonin activation of the potassium channel KCNMA1/BK and the dissociation of G-beta and G-gamma subunits, thereby decreasing synaptic transmission. The protein is Melatonin receptor type 1A (MTNR1A) of Bos taurus (Bovine).